A 340-amino-acid polypeptide reads, in one-letter code: Phenylalanine--tRNA ligase alpha subunit (340 aa).

Position 254 (E254) interacts with Mg(2+).

The protein belongs to the class-II aminoacyl-tRNA synthetase family. Phe-tRNA synthetase alpha subunit type 1 subfamily. As to quaternary structure, tetramer of two alpha and two beta subunits. The cofactor is Mg(2+).

It localises to the cytoplasm. The enzyme catalyses tRNA(Phe) + L-phenylalanine + ATP = L-phenylalanyl-tRNA(Phe) + AMP + diphosphate + H(+). In Caldicellulosiruptor saccharolyticus (strain ATCC 43494 / DSM 8903 / Tp8T 6331), this protein is Phenylalanine--tRNA ligase alpha subunit.